Consider the following 145-residue polypeptide: Cytochrome b (145 aa).

A helical transmembrane segment spans residues 38 to 58 (FFALHFLLPFVLAALVIMHLI). Heme b contacts are provided by His42 and His56. His61 is a binding site for a ubiquinone. The chain crosses the membrane as a helical span at residues 85-105 (FVFKDLVTVFIFFIVLSVFVF).

Belongs to the cytochrome b family. As to quaternary structure, fungal cytochrome b-c1 complex contains 10 subunits; 3 respiratory subunits, 2 core proteins and 5 low-molecular weight proteins. Cytochrome b-c1 complex is a homodimer. Requires heme b as cofactor.

It is found in the mitochondrion inner membrane. Functionally, component of the ubiquinol-cytochrome c reductase complex (complex III or cytochrome b-c1 complex) that is part of the mitochondrial respiratory chain. The b-c1 complex mediates electron transfer from ubiquinol to cytochrome c. Contributes to the generation of a proton gradient across the mitochondrial membrane that is then used for ATP synthesis. In Aspergillus fumigatus (Neosartorya fumigata), this protein is Cytochrome b (cob).